An 888-amino-acid chain; its full sequence is Serine/threonine-protein phosphatase 1 regulatory subunit 10 (888 aa).

Positions 1–348 are interaction with TOX4; sequence MGSGPIDPKE…EPAPPAEPMD (348 aa). In terms of domain architecture, TFIIS N-terminal spans 73–147; it reads KLLNNWLTYS…SDWMAVIRSQ (75 aa). Disordered stretches follow at residues 147 to 213, 247 to 270, 306 to 400, and 534 to 853; these read QSST…STGL, SATA…NTAP, KKKK…KTVT, and VETL…HGGD. Basic and acidic residues-rich tracts occupy residues 153 to 166 and 174 to 196; these read AEKD…EGKS and PLTE…EKPK. A Glycyl lysine isopeptide (Lys-Gly) (interchain with G-Cter in SUMO2) cross-link involves residue K179. Over residues 248-258 the composition is skewed to low complexity; it reads ATAAPGDAAPP. Residue K262 forms a Glycyl lysine isopeptide (Lys-Gly) (interchain with G-Cter in SUMO2) linkage. S313 is subject to Phosphoserine. Polar residues predominate over residues 325–334; the sequence is KTSTEQSTAK. At S382 the chain carries Phosphoserine. The tract at residues 388–417 is necessary for interaction with PPP1CA; it reads QLTRKGRKRKTVTWPEEGKLREYFYFELDE. Residues 393–408 form a necessary for interaction with PPP1CC region; it reads GRKRKTVTWPEEGKLR. Residues 394–423 carry the PP1-binding motif motif; the sequence is RKRKTVTWPEEGKLREYFYFELDETERVNV. Phosphothreonine is present on T398. Positions 418–619 are interaction with WDR82; it reads TERVNVNKIK…LKQMLVPHGL (202 aa). A compositionally biased stretch (gly residues) spans 540–551; the sequence is GGSGGSPDGAGG. Phosphoserine is present on residues S545 and S591. A compositionally biased stretch (polar residues) spans 583 to 595; it reads EILTSIMGSPNSH. The span at 596–611 shows a compositional bias: basic and acidic residues; sequence PSEELLKQPDYSDKLK. Over residues 644-655 the composition is skewed to pro residues; that stretch reads PPGPGGPMPGPH. R665 is subject to Omega-N-methylarginine. Low complexity predominate over residues 674–690; that stretch reads RGGDPFWDGPGDPMRGG. R693 and R737 each carry omega-N-methylarginine. 2 stretches are compositionally biased toward gly residues: residues 724-762 and 784-794; these read ARGG…GSMG and GPGGNMGGSGG. Positions 811–851 are enriched in basic and acidic residues; the sequence is PHDVPSHRGHDHRGPPPHEHRGHDGHGGGGHRGHDGGHSHG. The segment at 854-882 adopts a C3H1-type zinc-finger fold; it reads MSNRPVCRHFMMKGNCRYENNCAFYHPGV.

In terms of assembly, component of the PNUTS-PP1 complex (also named PTW/PP1 complex), composed of PPP1R10/PNUTS, TOX4, WDR82, and PPP1CA (or PPP1CB or PPP1CC). Post-translationally, phosphorylated on Ser-398 by PKA within the region necessary for interaction with PPP1CA.

The protein localises to the nucleus. Its subcellular location is the chromosome. Its function is as follows. Substrate-recognition component of the PNUTS-PP1 protein phosphatase complex, a protein phosphatase 1 (PP1) complex that promotes RNA polymerase II transcription pause-release, allowing transcription elongation. Promoter-proximal pausing by RNA polymerase II is a transcription halt following transcription initiation but prior to elongation, which acts as a checkpoint to control that transcripts are favorably configured for transcriptional elongation. The PNUTS-PP1 complex mediates the release of RNA polymerase II from promoter-proximal region of genes by catalyzing dephosphorylation of proteins involved in transcription, such as AFF4, CDK9, MEPCE, INTS12, NCBP1, POLR2M/GDOWN1 and SUPT6H. The PNUTS-PP1 complex also regulates RNA polymerase II transcription termination by mediating dephosphorylation of SUPT5H in termination zones downstream of poly(A) sites, thereby promoting deceleration of RNA polymerase II transcription. PNUTS-PP1 complex is also involved in the response to replication stress by mediating dephosphorylation of POLR2A at 'Ser-5' of the CTD, promoting RNA polymerase II degradation. The PNUTS-PP1 complex also plays a role in the control of chromatin structure and cell cycle progression during the transition from mitosis into interphase. PNUTS-PP1 complex mediates dephosphorylation of MYC, promoting MYC stability by preventing MYC ubiquitination by the SCF(FBXW7) complex. In addition to acts as a substrate-recognition component, PPP1R10/PNUTS also acts as a nuclear targeting subunit for the PNUTS-PP1 complex. In some context, PPP1R10/PNUTS also acts as an inhibitor of protein phosphatase 1 (PP1) activity by preventing access to substrates, such as RB. The chain is Serine/threonine-protein phosphatase 1 regulatory subunit 10 from Mus musculus (Mouse).